We begin with the raw amino-acid sequence, 412 residues long: Putative pectate lyase 11 (412 aa).

An N-terminal signal peptide occupies residues 1 to 24; it reads MVSYSNNHFAYAFLLLLTIGNTLA. Ca(2+) contacts are provided by D210, D234, and D238. The active site involves R290.

This sequence belongs to the polysaccharide lyase 1 family. It depends on Ca(2+) as a cofactor.

It catalyses the reaction Eliminative cleavage of (1-&gt;4)-alpha-D-galacturonan to give oligosaccharides with 4-deoxy-alpha-D-galact-4-enuronosyl groups at their non-reducing ends.. It functions in the pathway glycan metabolism; pectin degradation; 2-dehydro-3-deoxy-D-gluconate from pectin: step 2/5. The polypeptide is Putative pectate lyase 11 (Arabidopsis thaliana (Mouse-ear cress)).